The following is a 105-amino-acid chain: Large ribosomal subunit protein uL24 (105 aa).

Positions 75 to 105 (DSDGNPTRVGYRTDEESGKRVRISRKNGKDI) are disordered. A compositionally biased stretch (basic residues) spans 94-105 (RVRISRKNGKDI).

Belongs to the universal ribosomal protein uL24 family. In terms of assembly, part of the 50S ribosomal subunit.

Its function is as follows. One of two assembly initiator proteins, it binds directly to the 5'-end of the 23S rRNA, where it nucleates assembly of the 50S subunit. In terms of biological role, one of the proteins that surrounds the polypeptide exit tunnel on the outside of the subunit. The chain is Large ribosomal subunit protein uL24 from Rhodococcus jostii (strain RHA1).